Here is a 251-residue protein sequence, read N- to C-terminus: Insulin-induced gene 1 protein (251 aa).

The Cytoplasmic segment spans residues 1 to 58; it reads MQTLEEHCWSCSCTRGRDKKGTKVSAWLARRVGKAMSSLNSLLSLAYSTLASSEGRSL. The helical transmembrane segment at 59–81 threads the bilayer; the sequence is IQRSLVLFTVGVFLALVLNLLQI. The Extracellular segment spans residues 82-100; sequence QRNVTLFPEEVIATIFSSA. A helical membrane pass occupies residues 101–118; it reads WWVPPCCGTAAAVVGLLY. Topologically, residues 119–133 are cytoplasmic; sequence PCIDSRIGEPHKFKR. A helical transmembrane segment spans residues 134-156; the sequence is EWASVMRCIAVFVGINHASAKLD. Topologically, residues 157-159 are extracellular; that stretch reads FAN. The helical transmembrane segment at 160–178 threads the bilayer; that stretch reads NVQLSLTLAALSLGLWWTF. The Cytoplasmic portion of the chain corresponds to 179 to 183; it reads DRSRS. Residues 184–205 form a helical membrane-spanning segment; the sequence is GLGLGITIAFLATLITQFLVYN. Topologically, residues 206–219 are extracellular; sequence GVYQYTSPDFLYIR. A helical membrane pass occupies residues 220-237; it reads SWLPCIFFSGGVTVGNIG. At 238-251 the chain is on the cytoplasmic side; sequence RQLAMGSSEKTHGD. The short motif at 245–251 is the KxHxx element; it reads SEKTHGD.

This sequence belongs to the INSIG family. As to quaternary structure, interacts with scap; interaction is direct and only takes place in the presence of sterols; it prevents interaction between scap and the coat protein complex II (COPII). Associates with the SCAP-SREBP complex; association is mediated via its interaction with scap and only takes place in the presence of sterols.

The protein localises to the endoplasmic reticulum membrane. Its function is as follows. Oxysterol-binding protein that mediates feedback control of cholesterol synthesis by controlling both endoplasmic reticulum to Golgi transport of scap and degradation of hmgcr. Acts as a negative regulator of cholesterol biosynthesis by mediating the retention of the SCAP-SREBP complex in the endoplasmic reticulum, thereby blocking the processing of sterol regulatory element-binding proteins (SREBPs). Binds oxysterol, including 25-hydroxycholesterol, regulating interaction with scap and retention of the SCAP-SREBP complex in the endoplasmic reticulum. In presence of oxysterol, interacts with scap, retaining the SCAP-SREBP complex in the endoplasmic reticulum, thereby preventing scap from escorting SREBPs to the Golgi. Sterol deprivation reduces oxysterol-binding, disrupting the interaction between insig1 and scap, thereby promoting Golgi transport of the SCAP-SREBP complex, followed by processing and nuclear translocation of SREBPs. Also regulates cholesterol synthesis by regulating degradation of hmgcr. This Xenopus laevis (African clawed frog) protein is Insulin-induced gene 1 protein.